Reading from the N-terminus, the 107-residue chain is Sulmotoxin 1 (107 aa).

Residues 1 to 19 (MKTLLLALAVVVLVCLGSA) form the signal peptide. A propeptide spanning residues 20-34 (NELGLGRQRVDRRRR) is cleaved from the precursor. 5 disulfide bridges follow: Cys44–Cys68, Cys47–Cys55, Cys61–Cys83, Cys87–Cys98, and Cys99–Cys104.

The protein belongs to the three-finger toxin family. Ancestral subfamily. Boigatoxin sub-subfamily. Monomer. Expressed by the venom gland.

It is found in the secreted. In terms of biological role, mammal-specific neurotoxin (tested on mice). Not toxic to lizards (tested on geckos). The protein is Sulmotoxin 1 of Spilotes sulphureus (Amazon puffing snake).